We begin with the raw amino-acid sequence, 247 residues long: Synaptogyrin homolog 1 (247 aa).

One can recognise an MARVEL domain in the interval 21–175 (FFKKPTVLFR…AAFFAWRRYE (155 aa)). Transmembrane regions (helical) follow at residues 25–45 (PTVL…YSVS), 69–89 (CSFA…LIVL), 105–125 (AVLA…IGFF), and 151–171 (FGIL…FFAW). The disordered stretch occupies residues 206–247 (DSTGIGHVGAPPPQSSYQSGAAPQTMQQPPSNPYTQSEGYGY). Residues 220 to 247 (SSYQSGAAPQTMQQPPSNPYTQSEGYGY) are compositionally biased toward polar residues.

The protein belongs to the synaptogyrin family. As to expression, expressed in a wide variety of neurons and is expressed weakly in the non-neuronal distal tip cells. A punctate pattern was observed in the ventral and dorsal nerve cords and the nerve ring. Weak expression is seen in neuronal cell bodies and commissures.

The protein localises to the membrane. In Caenorhabditis elegans, this protein is Synaptogyrin homolog 1 (sng-1).